The chain runs to 512 residues: Maturase K (512 aa).

The protein belongs to the intron maturase 2 family. MatK subfamily.

The protein localises to the plastid. Its subcellular location is the chloroplast. In terms of biological role, usually encoded in the trnK tRNA gene intron. Probably assists in splicing its own and other chloroplast group II introns. This is Maturase K from Oenothera parviflora (Small-flowered evening primrose).